The chain runs to 498 residues: Protein spinster homolog 3 (498 aa).

Transmembrane regions (helical) follow at residues Ile-49–Val-71, Gly-87–Leu-107, Lys-114–Val-134, Leu-148–Phe-168, Leu-175–Gly-195, Trp-207–Ile-227, Phe-260–Trp-280, Tyr-309–Ile-329, Leu-343–Ala-363, Phe-373–Leu-393, Leu-407–Ile-427, and Leu-451–Ile-471.

The protein belongs to the major facilitator superfamily. Spinster (TC 2.A.1.49) family.

The protein resides in the membrane. Functionally, sphingolipid transporter. The chain is Protein spinster homolog 3 (spns3) from Danio rerio (Zebrafish).